The chain runs to 343 residues: Leucine-rich repeat-containing protein 23 (343 aa).

The span at 1 to 30 (MSDEDDLEDSEPDQDDSEKEEDEKETEEGE) shows a compositional bias: acidic residues. The interval 1–47 (MSDEDDLEDSEPDQDDSEKEEDEKETEEGEDYRKEGEEFPEEWLPTP) is disordered. 8 LRR repeats span residues 92–113 (HLRY…NYLT), 114–134 (HLLW…NELP), 135–155 (YLQI…ISHP), 156–177 (RLET…DPEK), 180–200 (SLHT…INLP), 201–222 (KLKN…EDLS), 223–244 (NLTT…SREM), and 246–267 (SLQY…AKLR). The tract at residues 208–343 (AQNMLKKVEG…RDLEPEQSLI (136 aa)) is interaction with RSPH9. Residues 280–318 (NPCTDETSYRQEALVQMPYLERLDKEFYEEEERAEADVI) form the LRRCT domain. Positions 307-329 (YEEEERAEADVIRQRLKEEKEQE) form a coiled coil. The segment covering 318–337 (IRQRLKEEKEQEPEPQRDLE) has biased composition (basic and acidic residues). The tract at residues 318-343 (IRQRLKEEKEQEPEPQRDLEPEQSLI) is disordered.

In terms of assembly, component of the axonemal radial spoke complex. Interacts with RSPH3. Interacts with RSPH9. Expressed in spermatozoa.

It localises to the cell projection. It is found in the cilium. Its subcellular location is the flagellum. The protein localises to the cytoplasm. The protein resides in the cytoskeleton. It localises to the flagellum axoneme. In terms of biological role, essential for sperm motility and male fertility. Plays an important role in the proper assembly of the third radial spoke (RS3) head and the bridge structure between RS2 and RS3 in the sperm flagella. In Homo sapiens (Human), this protein is Leucine-rich repeat-containing protein 23 (LRRC23).